The chain runs to 183 residues: Ribonuclease H (183 aa).

The region spanning 2-151 is the RNase H type-1 domain; that stretch reads SQARFIAFSD…VDQLAQAAAR (150 aa). D11, E57, D79, and D143 together coordinate Mg(2+).

This sequence belongs to the RNase H family. As to quaternary structure, monomer. Mg(2+) serves as cofactor.

The protein localises to the cytoplasm. It carries out the reaction Endonucleolytic cleavage to 5'-phosphomonoester.. Endonuclease that specifically degrades the RNA of RNA-DNA hybrids. The chain is Ribonuclease H from Anaeromyxobacter dehalogenans (strain 2CP-C).